The sequence spans 170 residues: Ribosome maturation factor RimM (170 aa).

The 74-residue stretch at 96-169 (EGEFYACDVE…VVQLATLEGL (74 aa)) folds into the PRC barrel domain.

It belongs to the RimM family. As to quaternary structure, binds ribosomal protein uS19.

It is found in the cytoplasm. Functionally, an accessory protein needed during the final step in the assembly of 30S ribosomal subunit, possibly for assembly of the head region. Essential for efficient processing of 16S rRNA. May be needed both before and after RbfA during the maturation of 16S rRNA. It has affinity for free ribosomal 30S subunits but not for 70S ribosomes. This Sorangium cellulosum (strain So ce56) (Polyangium cellulosum (strain So ce56)) protein is Ribosome maturation factor RimM.